Reading from the N-terminus, the 257-residue chain is Type III pantothenate kinase (257 aa).

Residue 6–13 coordinates ATP; it reads DAGNTNIV. Substrate is bound by residues Y100 and 107 to 110; that span reads GADR. Catalysis depends on D109, which acts as the Proton acceptor. Residue D129 coordinates K(+). ATP is bound at residue T132. Residue T184 participates in substrate binding.

The protein belongs to the type III pantothenate kinase family. As to quaternary structure, homodimer. NH4(+) serves as cofactor. It depends on K(+) as a cofactor.

The protein resides in the cytoplasm. It carries out the reaction (R)-pantothenate + ATP = (R)-4'-phosphopantothenate + ADP + H(+). The protein operates within cofactor biosynthesis; coenzyme A biosynthesis; CoA from (R)-pantothenate: step 1/5. Its function is as follows. Catalyzes the phosphorylation of pantothenate (Pan), the first step in CoA biosynthesis. In Clostridium botulinum (strain Alaska E43 / Type E3), this protein is Type III pantothenate kinase.